A 108-amino-acid polypeptide reads, in one-letter code: Protein YcgL (108 aa).

The YcgL domain occupies 12 to 96; the sequence is MFCVIYRSSK…PPEDLLKQHL (85 aa).

This Escherichia coli O127:H6 (strain E2348/69 / EPEC) protein is Protein YcgL.